Here is a 206-residue protein sequence, read N- to C-terminus: Small ribosomal subunit protein uS4 (206 aa).

The S4 RNA-binding domain maps to 96–156 (TRLDNVVYRM…EKSRTQARIK (61 aa)).

The protein belongs to the universal ribosomal protein uS4 family. In terms of assembly, part of the 30S ribosomal subunit. Contacts protein S5. The interaction surface between S4 and S5 is involved in control of translational fidelity.

Functionally, one of the primary rRNA binding proteins, it binds directly to 16S rRNA where it nucleates assembly of the body of the 30S subunit. In terms of biological role, with S5 and S12 plays an important role in translational accuracy. The chain is Small ribosomal subunit protein uS4 from Shewanella halifaxensis (strain HAW-EB4).